Consider the following 268-residue polypeptide: Indole-3-glycerol phosphate synthase (268 aa).

This sequence belongs to the TrpC family.

The enzyme catalyses 1-(2-carboxyphenylamino)-1-deoxy-D-ribulose 5-phosphate + H(+) = (1S,2R)-1-C-(indol-3-yl)glycerol 3-phosphate + CO2 + H2O. The protein operates within amino-acid biosynthesis; L-tryptophan biosynthesis; L-tryptophan from chorismate: step 4/5. The polypeptide is Indole-3-glycerol phosphate synthase (Acinetobacter baumannii (strain SDF)).